Reading from the N-terminus, the 326-residue chain is tRNA-dihydrouridine(20/20a) synthase (326 aa).

FMN-binding positions include 11-13 and Gln63; that span reads PML. The active-site Proton donor is Cys93. FMN-binding positions include Lys132, His165, 205 to 207, and 227 to 228; these read NGG and GR.

It belongs to the Dus family. DusA subfamily. The cofactor is FMN.

The catalysed reaction is 5,6-dihydrouridine(20) in tRNA + NADP(+) = uridine(20) in tRNA + NADPH + H(+). It catalyses the reaction 5,6-dihydrouridine(20) in tRNA + NAD(+) = uridine(20) in tRNA + NADH + H(+). The enzyme catalyses 5,6-dihydrouridine(20a) in tRNA + NADP(+) = uridine(20a) in tRNA + NADPH + H(+). It carries out the reaction 5,6-dihydrouridine(20a) in tRNA + NAD(+) = uridine(20a) in tRNA + NADH + H(+). Catalyzes the synthesis of 5,6-dihydrouridine (D), a modified base found in the D-loop of most tRNAs, via the reduction of the C5-C6 double bond in target uridines. Specifically modifies U20 and U20a in tRNAs. This Vibrio vulnificus (strain CMCP6) protein is tRNA-dihydrouridine(20/20a) synthase.